The sequence spans 235 residues: Large ribosomal subunit protein uL3 (235 aa).

At glutamine 151 the chain carries N5-methylglutamine.

It belongs to the universal ribosomal protein uL3 family. In terms of assembly, part of the 50S ribosomal subunit. Forms a cluster with proteins L14 and L19. Post-translationally, methylated by PrmB.

Functionally, one of the primary rRNA binding proteins, it binds directly near the 3'-end of the 23S rRNA, where it nucleates assembly of the 50S subunit. This Rhodospirillum rubrum (strain ATCC 11170 / ATH 1.1.1 / DSM 467 / LMG 4362 / NCIMB 8255 / S1) protein is Large ribosomal subunit protein uL3.